A 349-amino-acid polypeptide reads, in one-letter code: Ion-translocating oxidoreductase complex subunit D (349 aa).

A run of 3 helical transmembrane segments spans residues 20–42 (VMQR…FGWG), 77–99 (SAML…WMIV), and 124–144 (AMAA…TWIA). Position 185 is an FMN phosphoryl threonine (threonine 185). 5 consecutive transmembrane segments (helical) span residues 212-232 (STGV…LVLL), 239-259 (WHIS…GFLL), 265-285 (ASPL…FIAT), 291-311 (ATSP…VYII), and 315-335 (GGYP…APFI).

This sequence belongs to the NqrB/RnfD family. As to quaternary structure, the complex is composed of six subunits: RnfA, RnfB, RnfC, RnfD, RnfE and RnfG. FMN is required as a cofactor.

The protein localises to the cell inner membrane. Its function is as follows. Part of a membrane-bound complex that couples electron transfer with translocation of ions across the membrane. This Shewanella baltica (strain OS185) protein is Ion-translocating oxidoreductase complex subunit D.